The primary structure comprises 79 residues: D-alanyl carrier protein (79 aa).

Residues 1–77 (MDTKQGVLDI…KIVAKVESLE (77 aa)) enclose the Carrier domain. Ser35 carries the post-translational modification O-(pantetheine 4'-phosphoryl)serine.

This sequence belongs to the DltC family. Post-translationally, 4'-phosphopantetheine is transferred from CoA to a specific serine of apo-DCP.

It localises to the cytoplasm. The protein operates within cell wall biogenesis; lipoteichoic acid biosynthesis. Carrier protein involved in the D-alanylation of lipoteichoic acid (LTA). The loading of thioester-linked D-alanine onto DltC is catalyzed by D-alanine--D-alanyl carrier protein ligase DltA. The DltC-carried D-alanyl group is further transferred to cell membrane phosphatidylglycerol (PG) by forming an ester bond, probably catalyzed by DltD. D-alanylation of LTA plays an important role in modulating the properties of the cell wall in Gram-positive bacteria, influencing the net charge of the cell wall. The polypeptide is D-alanyl carrier protein (Lactobacillus acidophilus (strain ATCC 700396 / NCK56 / N2 / NCFM)).